We begin with the raw amino-acid sequence, 257 residues long: Hydroxyacylglutathione hydrolase (257 aa).

Residues H54, H56, D58, H59, H113, D137, and H175 each contribute to the Zn(2+) site.

This sequence belongs to the metallo-beta-lactamase superfamily. Glyoxalase II family. In terms of assembly, monomer. Zn(2+) is required as a cofactor.

The catalysed reaction is an S-(2-hydroxyacyl)glutathione + H2O = a 2-hydroxy carboxylate + glutathione + H(+). The protein operates within secondary metabolite metabolism; methylglyoxal degradation; (R)-lactate from methylglyoxal: step 2/2. Functionally, thiolesterase that catalyzes the hydrolysis of S-D-lactoyl-glutathione to form glutathione and D-lactic acid. This Trichodesmium erythraeum (strain IMS101) protein is Hydroxyacylglutathione hydrolase.